The chain runs to 395 residues: Enolase (395 aa).

Residues His-136 and Glu-145 each contribute to the substrate site. Glu-188 functions as the Proton donor in the catalytic mechanism. Mg(2+)-binding residues include Asp-223, Glu-271, and Asp-296. Glu-271 and Asp-296 together coordinate substrate. Lys-321 (proton acceptor) is an active-site residue. Substrate contacts are provided by residues 348–351 (SHRS) and Lys-372.

This sequence belongs to the enolase family. In terms of assembly, homodimer. It depends on Mg(2+) as a cofactor.

Its subcellular location is the cytoplasm. It catalyses the reaction (2R)-2-phosphoglycerate = phosphoenolpyruvate + H2O. It functions in the pathway carbohydrate degradation; glycolysis; pyruvate from D-glyceraldehyde 3-phosphate: step 4/5. The protein is Enolase of Alligator mississippiensis (American alligator).